The sequence spans 654 residues: Probable protein phosphatase 2C 23 (654 aa).

Residues 11-30 (CLTGGAGRNKKPELSILEPD) are disordered. Position 147 is a phosphoserine (S147). Positions 243–645 (DVSLESQNLQ…DDVSIVVISL (403 aa)) constitute a PPM-type phosphatase domain. D280 and G281 together coordinate Mn(2+). Residues 309–336 (DDPKTDAKSSDEADVENRDSSSEKKSKN) form a disordered region. D573 and D636 together coordinate Mn(2+).

The protein belongs to the PP2C family. The cofactor is Mg(2+). Mn(2+) is required as a cofactor. Expressed in seedlings, roots, leaves, stems, young inflorescences, flowers and siliques.

The protein localises to the nucleus. The catalysed reaction is O-phospho-L-seryl-[protein] + H2O = L-seryl-[protein] + phosphate. It catalyses the reaction O-phospho-L-threonyl-[protein] + H2O = L-threonyl-[protein] + phosphate. In terms of biological role, involved in leaf development regulation. The protein is Probable protein phosphatase 2C 23 (PLL4) of Arabidopsis thaliana (Mouse-ear cress).